The following is an 84-amino-acid chain: Small ribosomal subunit protein uS17 (84 aa).

It belongs to the universal ribosomal protein uS17 family. As to quaternary structure, part of the 30S ribosomal subunit.

One of the primary rRNA binding proteins, it binds specifically to the 5'-end of 16S ribosomal RNA. The polypeptide is Small ribosomal subunit protein uS17 (Photorhabdus laumondii subsp. laumondii (strain DSM 15139 / CIP 105565 / TT01) (Photorhabdus luminescens subsp. laumondii)).